Here is a 1374-residue protein sequence, read N- to C-terminus: Ribonuclease 3 (1374 aa).

Disordered regions lie at residues 1-95, 130-406, and 452-497; these read MMQG…PLPP, PPVP…EEEE, and LGSR…SSSS. The segment covering 59 to 68 has biased composition (polar residues); it reads PSTTFSNSPA. Composition is skewed to pro residues over residues 70–95 and 145–160; these read NFLP…PLPP and MMPP…PPVM. The span at 182-202 shows a compositional bias: low complexity; sequence FNSFQNNPSSFLPSANNSSSP. Composition is skewed to basic and acidic residues over residues 216–289 and 298–313; these read PSER…ERER and RRSP…EYKR. Phosphoserine occurs at positions 355 and 373. Residues 364–399 show a composition bias toward basic and acidic residues; it reads RWEEEKDRWSDNQSSGKDKNYTSIKEKEPEETMPDK. The tract at residues 390–1365 is necessary for interaction with DGCR8 and pri-miRNA processing activity; the sequence is KEPEETMPDK…RWEREHQERE (976 aa). Residues 475–491 are compositionally biased toward acidic residues; the sequence is EDLESSSESECESDEDS. Residues Cys-536, Cys-538, His-549, Cys-561, His-609, Cys-676, and His-680 each coordinate Zn(2+). 2 RNase III domains span residues 876–1056 and 1107–1233; these read LMHL…LEGS and LTEF…IDKD. A Mg(2+)-binding site is contributed by Glu-969. A Zn(2+)-binding site is contributed by His-1026. The Mg(2+) site is built by Asn-1042, Glu-1045, Glu-1147, Asp-1219, and Glu-1222. The DRBM domain occupies 1260–1334; it reads DPKSQLQQCC…AMDALEKYNF (75 aa).

The protein belongs to the ribonuclease III family. Component of the microprocessor complex, or pri-miRNA processing protein complex, which is composed of DROSHA and DGCR8. The microprocessor complex is a heterotrimer; each of the two DROSHA RNase III domains binds one DGCR8 (via C-terminal region). Interacts with SP1 and SNIP1. Interacts with SRRT/ARS2. Interacts with CPSF3 and ISY1; this interaction is in an RNA dependent manner. Interacts with PUS10; interaction promotes pri-miRNAs processing. Requires Mg(2+) as cofactor. It depends on Mn(2+) as a cofactor. Post-translationally, degraded by autophagy in response to neuronal activity in motor neurons. As to expression, ubiquitous.

Its subcellular location is the nucleus. The protein localises to the nucleolus. The protein resides in the cytoplasm. It carries out the reaction Endonucleolytic cleavage to 5'-phosphomonoester.. Functionally, ribonuclease III double-stranded (ds) RNA-specific endoribonuclease that is involved in the initial step of microRNA (miRNA) biogenesis. Component of the microprocessor complex that is required to process primary miRNA transcripts (pri-miRNAs) to release precursor miRNA (pre-miRNA) in the nucleus. Within the microprocessor complex, DROSHA cleaves the 3' and 5' strands of a stem-loop in pri-miRNAs (processing center 11 bp from the dsRNA-ssRNA junction) to release hairpin-shaped pre-miRNAs that are subsequently cut by the cytoplasmic DICER to generate mature miRNAs. Involved also in pre-rRNA processing. Cleaves double-strand RNA and does not cleave single-strand RNA. Involved in the formation of GW bodies. Plays a role in growth homeostasis in response to autophagy in motor neurons. In Homo sapiens (Human), this protein is Ribonuclease 3 (DROSHA).